Reading from the N-terminus, the 492-residue chain is MHFNTLTCVLVGLVAHTSAVPTKREAVNSCLTQAKVPTDAQGSQSWKEDGTAYNLRLPFEPAAIAVPTTVAQVSAAVECGAKHGVAISAKSGGHSYTSLGFGGEDGHLMIELDRMYSVKLAKDGTAKIQPGARLGHVATELWNQGKRALAHGTCPGVGLGGHALHGGYGMVARKHGLTLDLMIGATVVLPTGKVVHCSKTENSDLFWGIRGAGANFGVVVELEFQTFAAPEKITYFDIGLNWDQNTAPQGLYDFQEFGKGMPAEITMQMGVSKNGYSVDGAYIGDEASLRKALQPLVQKFGGVQVTATTVDWMGLVTHFAGAGVNVNPTSASYDAHDNFYASSLAAPALTLAEFKSFVNFVSTTGKSSSHSWWLQMDITGGTYSAVSKPKPSDTAYVHRDTLLLFQFYDSVAATAQYPSDGFNLIKGLRQSISSSLKAGTWGMYANYPDSQIKNDRATEMYWGSNVAKLEAVKAKYDPKNLFRNPQSIKPKA.

A signal peptide spans 1-19 (MHFNTLTCVLVGLVAHTSA). The FAD-binding PCMH-type domain occupies 57-229 (LPFEPAAIAV…VELEFQTFAA (173 aa)). A cross-link (6-(S-cysteinyl)-8alpha-(pros-histidyl)-FAD (His-Cys)) is located at residues 94-154 (HSYTSLGFGG…GKRALAHGTC (61 aa)).

The protein belongs to the oxygen-dependent FAD-linked oxidoreductase family. Requires FAD as cofactor. The FAD cofactor is bound via a bicovalent 6-S-cysteinyl, 8alpha-N1-histidyl FAD linkage.

The protein resides in the secreted. It catalyses the reaction N,N'-diacetylchitobiose + O2 = N,N'-diacetylchitobiono-1,5-lactone + H2O2. The enzyme catalyses N,N',N''-triacetylchitotriose + O2 = N,N',N''-triacetylchitotriono-1,5-lactone + H2O2. It carries out the reaction N,N',N'',N'''-tetraacetylchitotetraose + O2 = N,N',N'',N'''-tetraacetylchitotetraono-1,5-lactone + H2O2. Catalyzes the selective oxidation of C1 hydroxyl moieties on chitooligosaccharides with concomitant reduction of molecular oxygen to hydrogen peroxide. This results in the formation of the corresponding lactones, which typically undergo spontaneous hydrolysis. Chitooligosaccharides are homo- or heterooligomers of N-acetylglucosamine (GlcNAc) and D-glucosamine which are linked through beta-1,4-glycosidic bonds. For optimal substrate binding at least 2 GlcNAc units are needed, and chitooligosaccharide oxidase is most efficient on chitobiose, chitotriose and chitotetraose. The protein is Chitooligosaccharide oxidase of Gibberella zeae (strain ATCC MYA-4620 / CBS 123657 / FGSC 9075 / NRRL 31084 / PH-1) (Wheat head blight fungus).